The chain runs to 375 residues: tRNA-specific 2-thiouridylase MnmA (375 aa).

Residues 8–15 and methionine 34 each bind ATP; that span reads GLSGGVDS. An interaction with target base in tRNA region spans residues 104–106; it reads NPD. Cysteine 109 (nucleophile) is an active-site residue. A disulfide bridge connects residues cysteine 109 and cysteine 208. Residue glycine 134 participates in ATP binding. The tract at residues 158–160 is interaction with tRNA; the sequence is KDQ. Catalysis depends on cysteine 208, which acts as the Cysteine persulfide intermediate. An interaction with tRNA region spans residues 321–322; that stretch reads RY.

The protein belongs to the MnmA/TRMU family.

It localises to the cytoplasm. The catalysed reaction is S-sulfanyl-L-cysteinyl-[protein] + uridine(34) in tRNA + AH2 + ATP = 2-thiouridine(34) in tRNA + L-cysteinyl-[protein] + A + AMP + diphosphate + H(+). Functionally, catalyzes the 2-thiolation of uridine at the wobble position (U34) of tRNA, leading to the formation of s(2)U34. This is tRNA-specific 2-thiouridylase MnmA from Mycoplasma mycoides subsp. mycoides SC (strain CCUG 32753 / NCTC 10114 / PG1).